A 252-amino-acid polypeptide reads, in one-letter code: Hydroxyacylglutathione hydrolase (252 aa).

Zn(2+) is bound by residues His-54, His-56, Asp-58, His-59, His-113, Asp-132, and His-170.

The protein belongs to the metallo-beta-lactamase superfamily. Glyoxalase II family. As to quaternary structure, monomer. The cofactor is Zn(2+).

It catalyses the reaction an S-(2-hydroxyacyl)glutathione + H2O = a 2-hydroxy carboxylate + glutathione + H(+). The protein operates within secondary metabolite metabolism; methylglyoxal degradation; (R)-lactate from methylglyoxal: step 2/2. Thiolesterase that catalyzes the hydrolysis of S-D-lactoyl-glutathione to form glutathione and D-lactic acid. This is Hydroxyacylglutathione hydrolase from Thermosynechococcus vestitus (strain NIES-2133 / IAM M-273 / BP-1).